The chain runs to 338 residues: Heat-inducible transcription repressor HrcA (338 aa).

The protein belongs to the HrcA family.

In terms of biological role, negative regulator of class I heat shock genes (grpE-dnaK-dnaJ and groELS operons). Prevents heat-shock induction of these operons. The chain is Heat-inducible transcription repressor HrcA from Bacillus thuringiensis (strain Al Hakam).